Reading from the N-terminus, the 691-residue chain is Elongation factor G (691 aa).

The tr-type G domain occupies Glu-8–Ile-282. Residues Ala-17–Thr-24, Asp-81–His-85, and Asn-135–Asp-138 contribute to the GTP site.

It belongs to the TRAFAC class translation factor GTPase superfamily. Classic translation factor GTPase family. EF-G/EF-2 subfamily.

The protein localises to the cytoplasm. Functionally, catalyzes the GTP-dependent ribosomal translocation step during translation elongation. During this step, the ribosome changes from the pre-translocational (PRE) to the post-translocational (POST) state as the newly formed A-site-bound peptidyl-tRNA and P-site-bound deacylated tRNA move to the P and E sites, respectively. Catalyzes the coordinated movement of the two tRNA molecules, the mRNA and conformational changes in the ribosome. The chain is Elongation factor G from Prochlorococcus marinus (strain SARG / CCMP1375 / SS120).